The chain runs to 576 residues: Arginine--tRNA ligase (576 aa).

The 'HIGH' region motif lies at 126–136; it reads ANPTGPMHIGH.

This sequence belongs to the class-I aminoacyl-tRNA synthetase family. In terms of assembly, monomer.

The protein localises to the cytoplasm. The enzyme catalyses tRNA(Arg) + L-arginine + ATP = L-arginyl-tRNA(Arg) + AMP + diphosphate. This chain is Arginine--tRNA ligase, found in Rickettsia peacockii (strain Rustic).